Here is a 313-residue protein sequence, read N- to C-terminus: Ribosomal RNA small subunit methyltransferase H (313 aa).

S-adenosyl-L-methionine-binding positions include 35 to 37 (GGH), Asp-55, Phe-79, Asp-100, and Gln-107.

It belongs to the methyltransferase superfamily. RsmH family.

It is found in the cytoplasm. The catalysed reaction is cytidine(1402) in 16S rRNA + S-adenosyl-L-methionine = N(4)-methylcytidine(1402) in 16S rRNA + S-adenosyl-L-homocysteine + H(+). Functionally, specifically methylates the N4 position of cytidine in position 1402 (C1402) of 16S rRNA. The chain is Ribosomal RNA small subunit methyltransferase H from Burkholderia multivorans (strain ATCC 17616 / 249).